The sequence spans 431 residues: Ammonium transporter 3 (431 aa).

The Extracellular portion of the chain corresponds to 1 to 27 (MEQFSTSSSESSDSSSEYSLEFYMDTS). Residues 28–48 (WVLDAANLVFFMQAGFGMLEA) traverse the membrane as a helical segment. Topologically, residues 49–63 (GMVRAKNTKSILLKN) are cytoplasmic. The helical transmembrane segment at 64-84 (LINTAICAISYYCVGHSFAYG) threads the bilayer. Residues 85 to 102 (KVNPNSFVGFGNFFLMDY) lie on the Extracellular side of the membrane. The helical transmembrane segment at 103-125 (THYAYWMIQWAYAATATTIATGA) threads the bilayer. Topologically, residues 126 to 134 (MAERLQLHC) are cytoplasmic. A helical membrane pass occupies residues 135-155 (YILFTLVQTILIYPFVAHWIW). Topologically, residues 156 to 160 (SQNGW) are extracellular. A helical transmembrane segment spans residues 161-181 (LFDLGIVDFAGGAVIHIVAGI). Over 182 to 211 (TGACGSFLLGPRIGRFNQESGKPKNLPGHS) the chain is Cytoplasmic. The chain crosses the membrane as a helical span at residues 212-232 (VVLMSLGAMILWYSWYGYTAG). The Extracellular segment spans residues 233–249 (ASLGMTRSRVLPASRVS). The helical transmembrane segment at 250-270 (VVVTLSGATGLITVLGIGKIF) threads the bilayer. The Cytoplasmic segment spans residues 271–300 (NGHYDLVKGINGLIAGLVSSTSSCAYIEPW). Residues 301–321 (AAIIIGFIGGIVYWFSSWALL) form a helical membrane-spanning segment. Residues 322 to 333 (NWLRLDDPVDST) lie on the Extracellular side of the membrane. The helical transmembrane segment at 334–354 (AIHLFGGCWSLISVAFFATHG) threads the bilayer. The Cytoplasmic segment spans residues 355–357 (RVR). A helical transmembrane segment spans residues 358-378 (NPDIILPGGIFYGGGISLLWV). A topological domain (extracellular) is located at residue Q379. A helical membrane pass occupies residues 380–400 (LVGMVLAILWAGFLSGIFFFT). Residues 401–431 (MDYFGKLRVDVDTELAGLDNSNHGGSAYIFD) lie on the Cytoplasmic side of the membrane.

This sequence belongs to the ammonia transporter channel (TC 1.A.11.2) family.

The protein resides in the cell membrane. It localises to the endosome membrane. It is found in the cytoplasmic vesicle. The protein localises to the phagosome membrane. Ammonium transporter that mediates the import of ammonium in prespore cells. Controls ammonium homeostasis during growth and development. Ammonium has been shown to function as a morphogen at multiple steps during the development. May function as an ammonia sensor that relays information concerning ammonia concentrations to the signaling pathway involved in the slug versus culmination choice and regulates prestalk gene expression. This Dictyostelium discoideum (Social amoeba) protein is Ammonium transporter 3 (amtC).